The sequence spans 353 residues: Photosystem II protein D1 (353 aa).

T2 carries the N-acetylthreonine modification. T2 carries the phosphothreonine modification. A run of 3 helical transmembrane segments spans residues 29–46 (YIGW…TATS), 118–133 (HFLL…EWEL), and 142–156 (WIAV…AATA). Residue H118 participates in chlorophyll a binding. A pheophytin a-binding site is contributed by Y126. Residues D170 and E189 each contribute to the [CaMn4O5] cluster site. The helical transmembrane segment at 197-218 (FHMLGVAGVFGGSLFSAMHGSL) threads the bilayer. H198 is a chlorophyll a binding site. A quinone is bound by residues H215 and 264-265 (SF). Fe cation is bound at residue H215. Residue H272 participates in Fe cation binding. Residues 274–288 (FLTAWPVVGIWFTAL) traverse the membrane as a helical segment. H332, E333, D342, and A344 together coordinate [CaMn4O5] cluster. Residues 345–353 (AVEAPSTNG) constitute a propeptide that is removed on maturation.

The protein belongs to the reaction center PufL/M/PsbA/D family. In terms of assembly, PSII is composed of 1 copy each of membrane proteins PsbA, PsbB, PsbC, PsbD, PsbE, PsbF, PsbH, PsbI, PsbJ, PsbK, PsbL, PsbM, PsbT, PsbX, PsbY, PsbZ, Psb30/Ycf12, at least 3 peripheral proteins of the oxygen-evolving complex and a large number of cofactors. It forms dimeric complexes. It depends on The D1/D2 heterodimer binds P680, chlorophylls that are the primary electron donor of PSII, and subsequent electron acceptors. It shares a non-heme iron and each subunit binds pheophytin, quinone, additional chlorophylls, carotenoids and lipids. D1 provides most of the ligands for the Mn4-Ca-O5 cluster of the oxygen-evolving complex (OEC). There is also a Cl(-1) ion associated with D1 and D2, which is required for oxygen evolution. The PSII complex binds additional chlorophylls, carotenoids and specific lipids. as a cofactor. Tyr-161 forms a radical intermediate that is referred to as redox-active TyrZ, YZ or Y-Z. Post-translationally, C-terminally processed by CTPA; processing is essential to allow assembly of the oxygen-evolving complex and thus photosynthetic growth.

Its subcellular location is the plastid. It is found in the chloroplast thylakoid membrane. It carries out the reaction 2 a plastoquinone + 4 hnu + 2 H2O = 2 a plastoquinol + O2. In terms of biological role, photosystem II (PSII) is a light-driven water:plastoquinone oxidoreductase that uses light energy to abstract electrons from H(2)O, generating O(2) and a proton gradient subsequently used for ATP formation. It consists of a core antenna complex that captures photons, and an electron transfer chain that converts photonic excitation into a charge separation. The D1/D2 (PsbA/PsbD) reaction center heterodimer binds P680, the primary electron donor of PSII as well as several subsequent electron acceptors. This Barbarea verna (Land cress) protein is Photosystem II protein D1.